Reading from the N-terminus, the 231-residue chain is Protein FMP52, mitochondrial (231 aa).

Residues 1 to 44 constitute a mitochondrion transit peptide; sequence MNGLVLGATGLCGGGFLRHAQEAPQFSKVYAILRRELPFPATDK.

This sequence belongs to the FMP52 family.

It localises to the mitochondrion outer membrane. This Saccharomyces cerevisiae (strain ATCC 204508 / S288c) (Baker's yeast) protein is Protein FMP52, mitochondrial (FMP52).